A 204-amino-acid polypeptide reads, in one-letter code: Paraneoplastic antigen-like protein 8C (204 aa).

The disordered stretch occupies residues 135-204 (PPATGPRELP…RRHHASDKKL (70 aa)). Residues 182–204 (VGKRGKRKNKKNRRRHHASDKKL) show a composition bias toward basic residues.

This sequence belongs to the PNMA family.

This Homo sapiens (Human) protein is Paraneoplastic antigen-like protein 8C.